Here is a 130-residue protein sequence, read N- to C-terminus: Small ribosomal subunit protein uS11c (130 aa).

It belongs to the universal ribosomal protein uS11 family. In terms of assembly, part of the 30S ribosomal subunit.

The protein localises to the plastid. Its subcellular location is the chloroplast. In Anthoceros angustus (Hornwort), this protein is Small ribosomal subunit protein uS11c.